The following is a 110-amino-acid chain: Quaternary ammonium compound-resistance protein QacE (110 aa).

The next 4 helical transmembrane spans lie at 1–21 (MKGW…TSAL), 30–50 (LAPS…LSLV), 58–78 (VAYA…AWLL), and 85–105 (AWGF…NLLS).

This sequence belongs to the drug/metabolite transporter (DMT) superfamily. Small multidrug resistance (SMR) (TC 2.A.7.1) family.

Its subcellular location is the cell membrane. In terms of biological role, multidrug exporter. Is implicated for the resistance to bacteriocidal quaternary ammonium compounds. In Escherichia coli, this protein is Quaternary ammonium compound-resistance protein QacE (qacE).